The following is a 248-amino-acid chain: 3-deoxy-manno-octulosonate cytidylyltransferase (248 aa).

It belongs to the KdsB family.

Its subcellular location is the cytoplasm. The enzyme catalyses 3-deoxy-alpha-D-manno-oct-2-ulosonate + CTP = CMP-3-deoxy-beta-D-manno-octulosonate + diphosphate. Its pathway is nucleotide-sugar biosynthesis; CMP-3-deoxy-D-manno-octulosonate biosynthesis; CMP-3-deoxy-D-manno-octulosonate from 3-deoxy-D-manno-octulosonate and CTP: step 1/1. It participates in bacterial outer membrane biogenesis; lipopolysaccharide biosynthesis. In terms of biological role, activates KDO (a required 8-carbon sugar) for incorporation into bacterial lipopolysaccharide in Gram-negative bacteria. The chain is 3-deoxy-manno-octulosonate cytidylyltransferase from Salmonella paratyphi A (strain ATCC 9150 / SARB42).